The primary structure comprises 412 residues: MLSLKAQSSVVGKSSSLRLVRNFSKNVRALSQVADETKPGDDDLVQIDLPETSFEGYLLDVPELSYQTTKSNLLQMYKDMIIVRRMEMACDALYKAKKIRGFCHSSVGQEAIAVGIENAITKRDTVITSYRCHGFTYMRGAAVQAVLAELMGRRTGVSFGKGGSMHLYAPGFYGGNGIVGAQVPLGAGLAFAHQYKHEDACSFALYGDGASNQGQVFESFNMAKLWNLPAVFCCENNKYGMGTAAARSSAMTEYFKRGQYIPGLKVNGMDILAVYQASKFAKDWTVSGNGPIVLEYETYRYGGHSMSDPGTTYRTRDEIQHMRSKNDPIAGLKMHLLELGIATEDEIKAYDKAARKYVDEQVELADAAPAPEAKMSILFEDVYVPGSETPTLRGRLQEDTWDFAKKSFAFRD.

Pyruvate-binding residues include histidine 104, tyrosine 130, arginine 131, alanine 169, glycine 177, valine 179, aspartate 208, glycine 209, alanine 210, asparagine 237, and tyrosine 239. The thiamine diphosphate site is built by tyrosine 130 and arginine 131. 6 residues coordinate thiamine diphosphate: glycine 177, valine 179, aspartate 208, glycine 209, alanine 210, and asparagine 237. Residue aspartate 208 participates in Mg(2+) binding. Positions 237 and 239 each coordinate Mg(2+). Histidine 304 provides a ligand contact to thiamine diphosphate.

As to quaternary structure, tetramer of 2 alpha and 2 beta subunits. Thiamine diphosphate is required as a cofactor. Requires Mg(2+) as cofactor.

The protein localises to the mitochondrion matrix. The enzyme catalyses N(6)-[(R)-lipoyl]-L-lysyl-[protein] + pyruvate + H(+) = N(6)-[(R)-S(8)-acetyldihydrolipoyl]-L-lysyl-[protein] + CO2. E1 activity is regulated by phosphorylation (inactivation) and dephosphorylation (activation) of the alpha subunit. In terms of biological role, the pyruvate dehydrogenase complex catalyzes the overall conversion of pyruvate to acetyl-CoA and CO(2). It contains multiple copies of three enzymatic components: pyruvate dehydrogenase (E1), dihydrolipoamide acetyltransferase (E2) and lipoamide dehydrogenase (E3). This Kluyveromyces lactis (strain ATCC 8585 / CBS 2359 / DSM 70799 / NBRC 1267 / NRRL Y-1140 / WM37) (Yeast) protein is Pyruvate dehydrogenase E1 component subunit alpha, mitochondrial (PDA1).